We begin with the raw amino-acid sequence, 80 residues long: Exodeoxyribonuclease 7 small subunit (80 aa).

This sequence belongs to the XseB family. Heterooligomer composed of large and small subunits.

The protein localises to the cytoplasm. It carries out the reaction Exonucleolytic cleavage in either 5'- to 3'- or 3'- to 5'-direction to yield nucleoside 5'-phosphates.. Its function is as follows. Bidirectionally degrades single-stranded DNA into large acid-insoluble oligonucleotides, which are then degraded further into small acid-soluble oligonucleotides. In Streptomyces avermitilis (strain ATCC 31267 / DSM 46492 / JCM 5070 / NBRC 14893 / NCIMB 12804 / NRRL 8165 / MA-4680), this protein is Exodeoxyribonuclease 7 small subunit.